A 151-amino-acid chain; its full sequence is Large ribosomal subunit protein uL15 (151 aa).

Residues 1 to 60 (MAENNPLKIHNLRPAPGAKTAKTRVGRGEASKGKTAGRGTKGTKARYQVPERFEGGQMPL) form a disordered region.

This sequence belongs to the universal ribosomal protein uL15 family. In terms of assembly, part of the 50S ribosomal subunit.

Binds to the 23S rRNA. The chain is Large ribosomal subunit protein uL15 from Streptomyces coelicolor (strain ATCC BAA-471 / A3(2) / M145).